Reading from the N-terminus, the 78-residue chain is Beta sliding clamp (78 aa).

It belongs to the beta sliding clamp family. In terms of assembly, forms a ring-shaped head-to-tail homodimer around DNA which binds and tethers DNA polymerases and other proteins to the DNA. The DNA replisome complex has a single clamp-loading complex (3 tau and 1 each of delta, delta', psi and chi subunits) which binds 3 Pol III cores (1 core on the leading strand and 2 on the lagging strand) each with a beta sliding clamp dimer. Additional proteins in the replisome are other copies of gamma, psi and chi, Ssb, DNA helicase and RNA primase.

It localises to the cytoplasm. Confers DNA tethering and processivity to DNA polymerases and other proteins. Acts as a clamp, forming a ring around DNA (a reaction catalyzed by the clamp-loading complex) which diffuses in an ATP-independent manner freely and bidirectionally along dsDNA. Initially characterized for its ability to contact the catalytic subunit of DNA polymerase III (Pol III), a complex, multichain enzyme responsible for most of the replicative synthesis in bacteria; Pol III exhibits 3'-5' exonuclease proofreading activity. The beta chain is required for initiation of replication as well as for processivity of DNA replication. The polypeptide is Beta sliding clamp (dnaN) (Serratia marcescens).